Consider the following 338-residue polypeptide: Phenylalanine--tRNA ligase alpha subunit (338 aa).

Residue Glu252 coordinates Mg(2+).

This sequence belongs to the class-II aminoacyl-tRNA synthetase family. Phe-tRNA synthetase alpha subunit type 1 subfamily. In terms of assembly, tetramer of two alpha and two beta subunits. Mg(2+) serves as cofactor.

The protein resides in the cytoplasm. The enzyme catalyses tRNA(Phe) + L-phenylalanine + ATP = L-phenylalanyl-tRNA(Phe) + AMP + diphosphate + H(+). This chain is Phenylalanine--tRNA ligase alpha subunit, found in Pseudomonas aeruginosa (strain ATCC 15692 / DSM 22644 / CIP 104116 / JCM 14847 / LMG 12228 / 1C / PRS 101 / PAO1).